We begin with the raw amino-acid sequence, 344 residues long: Dihydroorotate dehydrogenase (quinone) (344 aa).

FMN is bound by residues 65 to 69 and T89; that span reads AGLDK. K69 is a substrate binding site. 114 to 118 is a binding site for substrate; the sequence is NRMGF. Residues N145 and N178 each contribute to the FMN site. N178 serves as a coordination point for substrate. Catalysis depends on S181, which acts as the Nucleophile. Position 183 (N183) interacts with substrate. K223 and T251 together coordinate FMN. 252–253 lines the substrate pocket; that stretch reads NT. FMN is bound by residues G274, G303, and 324–325; that span reads YS.

This sequence belongs to the dihydroorotate dehydrogenase family. Type 2 subfamily. As to quaternary structure, monomer. Requires FMN as cofactor.

The protein resides in the cell membrane. It catalyses the reaction (S)-dihydroorotate + a quinone = orotate + a quinol. It participates in pyrimidine metabolism; UMP biosynthesis via de novo pathway; orotate from (S)-dihydroorotate (quinone route): step 1/1. Functionally, catalyzes the conversion of dihydroorotate to orotate with quinone as electron acceptor. The chain is Dihydroorotate dehydrogenase (quinone) from Cupriavidus pinatubonensis (strain JMP 134 / LMG 1197) (Cupriavidus necator (strain JMP 134)).